The following is a 430-amino-acid chain: V-type ATP synthase beta chain 1 (430 aa).

The protein belongs to the ATPase alpha/beta chains family.

In terms of biological role, produces ATP from ADP in the presence of a proton gradient across the membrane. The V-type beta chain is a regulatory subunit. This chain is V-type ATP synthase beta chain 1 (atpB1), found in Treponema pallidum (strain Nichols).